The sequence spans 295 residues: Sulfotransferase 1A2 (295 aa).

Position 48–53 (48–53) interacts with 3'-phosphoadenylyl sulfate; it reads KSGTTW. A substrate-binding site is contributed by 106–108; it reads KTH. Histidine 108 serves as the catalytic Proton acceptor. Residues arginine 130, serine 138, tyrosine 193, 227-232, and 255-259 contribute to the 3'-phosphoadenylyl sulfate site; these read TSFKEM and FMRKG.

It belongs to the sulfotransferase 1 family. In terms of assembly, homodimer.

Its subcellular location is the cytoplasm. The enzyme catalyses a phenol + 3'-phosphoadenylyl sulfate = an aryl sulfate + adenosine 3',5'-bisphosphate + H(+). In terms of biological role, sulfotransferase that utilizes 3'-phospho-5'-adenylyl sulfate (PAPS) as sulfonate donor to catalyze the sulfate conjugation of catecholamines, phenolic drugs and neurotransmitters. Is also responsible for the sulfonation and activation of minoxidil. Mediates the metabolic activation of carcinogenic N-hydroxyarylamines to DNA binding products and could so participate as modulating factor of cancer risk. In Homo sapiens (Human), this protein is Sulfotransferase 1A2 (SULT1A2).